The chain runs to 200 residues: Lipopolysaccharide core heptose(II)-phosphate phosphatase (200 aa).

The first 25 residues, methionine 1–alanine 25, serve as a signal peptide directing secretion.

The protein belongs to the phosphoglycerate mutase family. Ais subfamily.

The protein resides in the periplasm. Its pathway is bacterial outer membrane biogenesis; lipopolysaccharide metabolism. Its function is as follows. Catalyzes the dephosphorylation of heptose(II) of the outer membrane lipopolysaccharide core. The chain is Lipopolysaccharide core heptose(II)-phosphate phosphatase from Escherichia coli O157:H7 (strain EC4115 / EHEC).